The chain runs to 577 residues: MSSSAGKDKEPKVSSGTKEREKEAKAVGPVKESKDKDLKSKVKDAKEGKRDPVGAQAGVAFSLDNTIKRANPASGMRKKASNAEVIKELSKCREENSTRLDLAKKSIHMLPVSIKDLTQITELYLYGNKLQSLPAEVGNLVNLVKLALSENSLTSLPDSLDNLKKLCMLDLRHNKLREIPPVVYRLSSLTTLFLRFNRITAVEKDLKMLPKLTMLSIRENKIKHLPAEIGELCNLITLDVAHNQLEHLPKEIGNCTQITNLDLQHNELLDLPDTIGNLSSLSRLGLRYNRLSAVPRSLSKCSELDELNLENNNISTLPEGLLSSLVKVNSLTLARNCFQSYPVGGPSQFSSIYSLNMEHNRINKIPFGIFSRAKVLSKLNMKDNQLTSLPLDFGTWTSMVELNLATNQLTKIPEDVSGLVSIEVLILSNNLLKKLPHGIGNLRKLRELDLEENKLESLPNEIAYLKDLQKLVLTNNQLTTLPRGIGHLTNLTHLGLGENLLTHLPEEIGTLENLEELYLNDNPNLHSLPFELALCSKLSIMSIENCPLSHLPPQIVAGGPSFIIQFLKMQGPYRAMV.

Basic and acidic residues predominate over residues 1-52 (MSSSAGKDKEPKVSSGTKEREKEAKAVGPVKESKDKDLKSKVKDAKEGKRDP). The segment at 1-53 (MSSSAGKDKEPKVSSGTKEREKEAKAVGPVKESKDKDLKSKVKDAKEGKRDPV) is disordered. 20 LRR repeats span residues 96–118 (NSTR…KDLT), 119–140 (QITE…VGNL), 142–164 (NLVK…DNLK), 165–186 (KLCM…VYRL), 188–209 (SLTT…LKML), 211–232 (KLTM…IGEL), 234–255 (NLIT…IGNC), 257–278 (QITN…IGNL), 280–302 (SLSR…SKCS), 303–324 (ELDE…LLSS), 327–348 (KVNS…GPSQ), 351–372 (SIYS…IFSR), 375–395 (VLSK…DFGT), 398–419 (SMVE…VSGL), 421–443 (SIEV…GNLR), 444–465 (KLRE…IAYL), 467–489 (DLQK…GHLT), 490–511 (NLTH…IGTL), 513–535 (NLEE…LALC), and 537–558 (KLSI…IVAG).

Belongs to the SHOC2 family.

It is found in the cytoplasm. It localises to the nucleus. Its function is as follows. Core component of the SHOC2-MRAS-PP1c (SMP) holophosphatase complex that regulates activation of the MAPK pathway. Acts as a scaffolding protein in the SMP complex. The SMP complex specifically dephosphorylates the inhibitory phosphorylation Raf kinases, stimulating their kinase activities. The SMP complex enhances the dephosphorylation activity and substrate specificity of PP1c. The chain is Leucine-rich repeat protein SHOC-2 (shoc2) from Xenopus laevis (African clawed frog).